Reading from the N-terminus, the 324-residue chain is DNA primase small subunit PriS (324 aa).

Catalysis depends on residues D94, D96, and D274.

It belongs to the eukaryotic-type primase small subunit family. Heterodimer of a small subunit (PriS) and a large subunit (PriL). Mg(2+) is required as a cofactor. Requires Mn(2+) as cofactor.

In terms of biological role, catalytic subunit of DNA primase, an RNA polymerase that catalyzes the synthesis of short RNA molecules used as primers for DNA polymerase during DNA replication. The small subunit contains the primase catalytic core and has DNA synthesis activity on its own. Binding to the large subunit stabilizes and modulates the activity, increasing the rate of DNA synthesis while decreasing the length of the DNA fragments, and conferring RNA synthesis capability. The DNA polymerase activity may enable DNA primase to also catalyze primer extension after primer synthesis. May also play a role in DNA repair. This is DNA primase small subunit PriS from Methanobrevibacter smithii (strain ATCC 35061 / DSM 861 / OCM 144 / PS).